Reading from the N-terminus, the 280-residue chain is MEVIRIPRIMREISKELRFKGKSIGFIPTMGALHEGHLSLIRRAKEENDIVIVSIFVNPTQFAQGEDYEKYPRDVELDKEKLEALAIDYLFLPDVNSLYPEGYSTYVVVEGLSDKLCGIFRPGHFRGVATIVCKLFNIVKPLRAYFGQKDYQQSLIIRRMVEDLNFDVEIIVCPTVREQDGLAMSSRNLYLNEKERQSATVIYKALKEGERLLNEGEKPLDVKLKMHEIFKNEPLIREIQYAGVYDPLTLEEVKERQNKYLLAVALKIGDTRLIDNLIVE.

Met-30–His-37 lines the ATP pocket. Catalysis depends on His-37, which acts as the Proton donor. Position 61 (Gln-61) interacts with (R)-pantoate. Gln-61 provides a ligand contact to beta-alanine. Residue Gly-147–Asp-150 participates in ATP binding. Gln-153 contributes to the (R)-pantoate binding site. ATP contacts are provided by residues Val-176 and Met-184–Arg-187.

The protein belongs to the pantothenate synthetase family. In terms of assembly, homodimer.

The protein localises to the cytoplasm. The enzyme catalyses (R)-pantoate + beta-alanine + ATP = (R)-pantothenate + AMP + diphosphate + H(+). The protein operates within cofactor biosynthesis; (R)-pantothenate biosynthesis; (R)-pantothenate from (R)-pantoate and beta-alanine: step 1/1. Its function is as follows. Catalyzes the condensation of pantoate with beta-alanine in an ATP-dependent reaction via a pantoyl-adenylate intermediate. The polypeptide is Pantothenate synthetase (Thermodesulfovibrio yellowstonii (strain ATCC 51303 / DSM 11347 / YP87)).